Here is a 203-residue protein sequence, read N- to C-terminus: Outer-membrane lipoprotein LolB (203 aa).

Positions 1–18 (MTLRSFLILLLSSIVLAG) are cleaved as a signal peptide. Cys19 carries N-palmitoyl cysteine lipidation. A lipid anchor (S-diacylglycerol cysteine) is attached at Cys19.

Belongs to the LolB family. In terms of assembly, monomer.

It localises to the cell outer membrane. Plays a critical role in the incorporation of lipoproteins in the outer membrane after they are released by the LolA protein. The sequence is that of Outer-membrane lipoprotein LolB from Vibrio campbellii (strain ATCC BAA-1116).